Reading from the N-terminus, the 281-residue chain is CDAN1-interacting nuclease 1 (281 aa).

Thr114 bears the Phosphothreonine mark.

Its subcellular location is the nucleus. The protein localises to the cytoplasm. Its function is as follows. Plays a role in erythroid cell differentiation. The polypeptide is CDAN1-interacting nuclease 1 (Mus musculus (Mouse)).